The following is a 152-amino-acid chain: Small ribosomal subunit protein uS15 (152 aa).

Residues 1 to 11 (MAKMHTKRKGK) show a composition bias toward basic residues. The segment at 1-24 (MAKMHTKRKGKSSSTRPNRTEPPE) is disordered.

This sequence belongs to the universal ribosomal protein uS15 family. Part of the 30S ribosomal subunit.

This chain is Small ribosomal subunit protein uS15, found in Methanosarcina mazei (strain ATCC BAA-159 / DSM 3647 / Goe1 / Go1 / JCM 11833 / OCM 88) (Methanosarcina frisia).